The chain runs to 175 residues: Sec-independent protein translocase protein TatB (175 aa).

The helical transmembrane segment at 1-21 threads the bilayer; it reads MLDLGLSKMALIGVVALVVLG. Positions 96–115 are enriched in low complexity; that stretch reads VSPGGSAAADAPDGPSAASG. Disordered stretches follow at residues 96–119 and 152–175; these read VSPGGSAAADAPDGPSAASGEPSW and QVQSGAARVARHRPASLRRPARFL. Residues 160-175 show a composition bias toward basic residues; it reads VARHRPASLRRPARFL.

It belongs to the TatB family. In terms of assembly, the Tat system comprises two distinct complexes: a TatABC complex, containing multiple copies of TatA, TatB and TatC subunits, and a separate TatA complex, containing only TatA subunits. Substrates initially bind to the TatABC complex, which probably triggers association of the separate TatA complex to form the active translocon.

Its subcellular location is the cell inner membrane. In terms of biological role, part of the twin-arginine translocation (Tat) system that transports large folded proteins containing a characteristic twin-arginine motif in their signal peptide across membranes. Together with TatC, TatB is part of a receptor directly interacting with Tat signal peptides. TatB may form an oligomeric binding site that transiently accommodates folded Tat precursor proteins before their translocation. This is Sec-independent protein translocase protein TatB from Burkholderia pseudomallei (strain 1710b).